Consider the following 465-residue polypeptide: Phosphomethylpyrimidine synthase (465 aa).

Residues Asn80, Met109, Tyr139, His175, 195 to 197 (SRG), 236 to 239 (DSLR), and Glu275 each bind substrate. His279 lines the Zn(2+) pocket. Residue Tyr302 coordinates substrate. His343 contacts Zn(2+). The [4Fe-4S] cluster site is built by Cys423, Cys426, and Cys431.

It belongs to the ThiC family. [4Fe-4S] cluster serves as cofactor.

It catalyses the reaction 5-amino-1-(5-phospho-beta-D-ribosyl)imidazole + S-adenosyl-L-methionine = 4-amino-2-methyl-5-(phosphooxymethyl)pyrimidine + CO + 5'-deoxyadenosine + formate + L-methionine + 3 H(+). It functions in the pathway cofactor biosynthesis; thiamine diphosphate biosynthesis. Catalyzes the synthesis of the hydroxymethylpyrimidine phosphate (HMP-P) moiety of thiamine from aminoimidazole ribotide (AIR) in a radical S-adenosyl-L-methionine (SAM)-dependent reaction. The sequence is that of Phosphomethylpyrimidine synthase from Synechococcus sp. (strain CC9311).